The chain runs to 358 residues: Cyanide hydratase (358 aa).

The 280-residue stretch at 8–287 folds into the CN hydrolase domain; sequence YKAAAVNAEP…QGLLFVDIDL (280 aa). Residue E48 is the Proton acceptor of the active site. K130 is a catalytic residue. Catalysis depends on C165, which acts as the Nucleophile.

It belongs to the carbon-nitrogen hydrolase superfamily. Nitrilase family. As to quaternary structure, oligomer of dimers, forming left-handed helical fibers.

The catalysed reaction is formamide = hydrogen cyanide + H2O. Its function is as follows. Catalyzes the hydration of cyanide to formamide. Degradation of cyanide may be important for plant pathogenic fungi in infection of cyanogenic plants. In Penicillium rubens (strain ATCC 28089 / DSM 1075 / NRRL 1951 / Wisconsin 54-1255) (Penicillium chrysogenum), this protein is Cyanide hydratase.